The following is a 379-amino-acid chain: UDP-4-amino-4-deoxy-L-arabinose--oxoglutarate aminotransferase (379 aa).

K182 carries the post-translational modification N6-(pyridoxal phosphate)lysine.

It belongs to the DegT/DnrJ/EryC1 family. ArnB subfamily. In terms of assembly, homodimer. The cofactor is pyridoxal 5'-phosphate.

It catalyses the reaction UDP-4-amino-4-deoxy-beta-L-arabinose + 2-oxoglutarate = UDP-beta-L-threo-pentopyranos-4-ulose + L-glutamate. The protein operates within nucleotide-sugar biosynthesis; UDP-4-deoxy-4-formamido-beta-L-arabinose biosynthesis; UDP-4-deoxy-4-formamido-beta-L-arabinose from UDP-alpha-D-glucuronate: step 2/3. Its pathway is bacterial outer membrane biogenesis; lipopolysaccharide biosynthesis. Its function is as follows. Catalyzes the conversion of UDP-4-keto-arabinose (UDP-Ara4O) to UDP-4-amino-4-deoxy-L-arabinose (UDP-L-Ara4N). The modified arabinose is attached to lipid A and is required for resistance to polymyxin and cationic antimicrobial peptides. This Escherichia coli (strain ATCC 8739 / DSM 1576 / NBRC 3972 / NCIMB 8545 / WDCM 00012 / Crooks) protein is UDP-4-amino-4-deoxy-L-arabinose--oxoglutarate aminotransferase.